The sequence spans 523 residues: Ribonuclease Y (523 aa).

A helical membrane pass occupies residues 28–48 (TYYIVATIIIAVIAVYVDYYI). In terms of domain architecture, KH spans 227–312 (TVYVVNLPND…EMVEKAKKEV (86 aa)). The region spanning 353 to 446 (VLKHSIEVSY…VQAADAISAA (94 aa)) is the HD domain.

Belongs to the RNase Y family.

The protein resides in the cell membrane. Endoribonuclease that initiates mRNA decay. This chain is Ribonuclease Y, found in Clostridium tetani (strain Massachusetts / E88).